The primary structure comprises 121 residues: Acid shock protein (121 aa).

An N-terminal signal peptide occupies residues 1–21 (MKKVLALMVAATLGLSSVAFA). Positions 22-63 (ADTTATATPAATSTTATVAAQTKATQHQKHKVTKKTTEQKAQ) are excised as a propeptide. Residues 40 to 121 (AAQTKATQHQ…AKKPVAAPAA (82 aa)) form a disordered region. Over residues 84-93 (AAKKHVKKAS) the composition is skewed to basic residues. Positions 94-103 (VQKAPVQKAQ) are enriched in low complexity. The segment covering 104–113 (AAKKHHKTAK) has biased composition (basic residues).

It belongs to the Asr family. Post-translationally, proteolytic processing gives rise to the active protein.

It localises to the periplasm. Functionally, required for growth and/or survival at acidic conditions. The chain is Acid shock protein from Yersinia pestis bv. Antiqua (strain Antiqua).